A 152-amino-acid polypeptide reads, in one-letter code: Prostaglandin E synthase (152 aa).

The Lumenal segment spans residues 1-12; that stretch reads MPAHSLVMSSPA. A helical membrane pass occupies residues 13–41; sequence LPAFLLCSTLLVIKMYVVAIITGQVRLRK. R38 lines the glutathione pocket. Over 42–60 the chain is Cytoplasmic; the sequence is KAFANPEDALRHGGPQYCR. A helical transmembrane segment spans residues 61 to 90; it reads SDPDVERCLRAHRNDMETIYPFLFLGFVYS. 73–77 lines the glutathione pocket; sequence RNDME. At 91-95 the chain is on the lumenal side; that stretch reads FLGPN. Residues 96-119 form a helical membrane-spanning segment; it reads PFVAWMHFLVFLVGRVAHTVAYLG. The glutathione site is built by H113 and Y117. At 120 to 123 the chain is on the cytoplasmic side; that stretch reads KLRA. A helical transmembrane segment spans residues 124-152; the sequence is PIRSVTYTLAQLPCASMALQILWEAARHL. Residue 126–130 coordinates glutathione; sequence RSVTY.

Belongs to the MAPEG family. As to quaternary structure, homotrimer. Requires glutathione as cofactor.

It is found in the membrane. The protein localises to the cytoplasm. Its subcellular location is the perinuclear region. The enzyme catalyses prostaglandin H2 = prostaglandin E2. It catalyses the reaction 2-glyceryl-prostaglandin H2 = 2-glyceryl-prostaglandin E2. It carries out the reaction prostaglandin G2 = (15S)-15-hydroperoxy-prostaglandin E2. The catalysed reaction is 1-chloro-2,4-dinitrobenzene + glutathione = 2,4-dinitrophenyl-S-glutathione + chloride + H(+). The enzyme catalyses (5S)-hydroperoxy-(6E,8Z,11Z,14Z)-eicosatetraenoate + 2 glutathione = (5S)-hydroxy-(6E,8Z,11Z,14Z)-eicosatetraenoate + glutathione disulfide + H2O. The protein operates within lipid metabolism; prostaglandin biosynthesis. Induced by interleukin IL1B. Functionally, terminal enzyme of the cyclooxygenase (COX)-2-mediated prostaglandin E2 (PGE2) biosynthetic pathway. Catalyzes the glutathione-dependent oxidoreduction of prostaglandin endoperoxide H2 (PGH2) to prostaglandin E2 (PGE2) in response to inflammatory stimuli. Plays a key role in inflammation response, fever and pain. Also catalyzes the oxidoreduction of endocannabinoids into prostaglandin glycerol esters and PGG2 into 15-hydroperoxy-PGE2. In addition, displays low glutathione transferase and glutathione-dependent peroxidase activities, toward 1-chloro-2,4-dinitrobenzene and 5-hydroperoxyicosatetraenoic acid (5-HPETE), respectively. This chain is Prostaglandin E synthase (PTGES), found in Homo sapiens (Human).